The primary structure comprises 169 residues: Diuretic hormone 44 (169 aa).

A signal peptide spans 1–18 (MILLGILASTTIIGLTSS). A propeptide spanning residues 19-96 (APLSSYERRD…ARRKQERDQR (78 aa)) is cleaved from the precursor. Positions 83–108 (MLELARRKQERDQRQIEENRRFLENI) form a coiled coil. Position 97 is a pyrrolidone carboxylic acid (Gln97). Residue Ile108 is modified to Isoleucine amide. A propeptide spanning residues 109 to 169 (GKRSVPVSDA…RVQANELRLL (61 aa)) is cleaved from the precursor.

In terms of processing, residues Ile-66 to Gly-109 may constitute another form of the DH44 peptide, which has not been detected yet. In terms of tissue distribution, expressed in brain, ventral ganglia and the retrocerebral complex (at protein level).

The protein resides in the secreted. Its function is as follows. Regulation of fluid secretion. The chain is Diuretic hormone 44 from Camponotus floridanus (Florida carpenter ant).